Consider the following 676-residue polypeptide: MAPPAAAPELGSCCICLDAITGAARALPCLHAFCLACIRRWLEGRPTCPLCKAPVQSLIHSVASDECFEEIPVGGGPGADGALEPDAAVIWGEDYDAGPIDLTAADGEASGAGGEAGAADGSEAGGGAGGAEEAGEARGAGAGRAAGAAGGRAGRGADAAQEFIDRVARGPRLPLLPNTPEHGPGAPYLRRVVEWVEGALVGSFAVTARELAAMTDYVMAMLAECGFDDDGLADAMEPLIGEDDAPAFVRSLLFVAARCVTVGPSHLIPQQSAPPGGRGVVFLDTSDSDSEGSEDDSWSESEESSSGLSTSDLTAIDDTETEPETDAEVESRRTRGASGAARARRPAERQYVSTRGRQTPAVQPAPRSLARRPCGRAAAVSAPPSSRSRGGRRDPRLPAAPRAAPAAQARACSPEPREEGRGAGLGVAAGETAGWGAGSEEGRGERRARLLGEAGPPRVQARRRRRTELDRAPTPAPAPAPAPAPISTVIDLTANAPARPADPAPAAAPGPASAGAQIGTPAAAAAVTAAAAAPSVARSSAPSPAVTAAATSTAAAISTRAPTPSPAGRAPAADPRRAGAPALAGAARAEVGRNGNPGRERRPASAMARGDLDPGPESSAQKRRRTEMEVAAWVRESLLGTPRRSSAALAPQPGGRQGPSLAGLLGRCSGGSAWRQ.

Residues 13–52 (CCICLDAITGAARALPCLHAFCLACIRRWLEGRPTCPLCK) form an RING-type zinc finger. Disordered stretches follow at residues 101–153 (DLTA…GGRA), 266–517 (HLIP…AGAQ), and 555–676 (AAIS…AWRQ). Gly residues predominate over residues 123–153 (EAGGGAGGAEEAGEARGAGAGRAAGAAGGRA). Over residues 286–303 (SDSDSEGSEDDSWSESEE) the composition is skewed to acidic residues. A compositionally biased stretch (low complexity) spans 304–314 (SSSGLSTSDLT). A compositionally biased stretch (acidic residues) spans 315-328 (AIDDTETEPETDAE). Residues 351–361 (YVSTRGRQTPA) show a composition bias toward polar residues. Composition is skewed to low complexity over residues 375 to 388 (GRAAAVSAPPSSRS) and 397 to 411 (LPAAPRAAPAAQARA). Residues 422–439 (GAGLGVAAGETAGWGAGS) are compositionally biased toward gly residues. A compositionally biased stretch (basic and acidic residues) spans 440 to 450 (EEGRGERRARL). Over residues 474–484 (TPAPAPAPAPA) the composition is skewed to pro residues. The segment covering 555 to 597 (AAISTRAPTPSPAGRAPAADPRRAGAPALAGAARAEVGRNGNP) has biased composition (low complexity).

This sequence belongs to the simplexviruses ICp0 family. In terms of processing, auto-ubiquitinated. Transactivation activity is possibly regulated through phosphorylation by casein kinase II.

It carries out the reaction S-ubiquitinyl-[E2 ubiquitin-conjugating enzyme]-L-cysteine + [acceptor protein]-L-lysine = [E2 ubiquitin-conjugating enzyme]-L-cysteine + N(6)-ubiquitinyl-[acceptor protein]-L-lysine.. Its function is as follows. Evades nuclear antiviral defenses triggered by dsDNA viruses. Acts during the initial stages of lytic infection and the reactivation of latent viral genome. Prevents the antiviral effect of nuclear bodies by degrading host PML and SP100. This chain is E3 ubiquitin-protein ligase ICP0 (BICP0), found in Bovine herpesvirus 1.1 (strain Cooper) (BoHV-1).